A 221-amino-acid chain; its full sequence is MEDELALSDQGSDEDEEVLTPAELINKLEEAWLNEKFAPELLESKSEVVECVMEQLNHMEQNLHRAKPGDLKISFHHMEIERIRYMLSSYLRSRMLKIEKFFPHILEKEKSRGEGEPPHLSPEEFAFAKEYMTNTETLLKSVALRHMPPNLQTVDLLKSVPKPNLDSFVFLRVKEEQNNILVEPETDEQSEYAIDMEVGSQHLIRYRTIAPLVASGAVKLI.

Belongs to the GINS4/SLD5 family. Component of the GINS complex which is a heterotetramer of gins1/psf1, gins2/psf2, gins3/psf3 and gins4/sld5. Component of the CMG helicase complex, composed of the mcm2-7 complex, the GINS complex and cdc45.

The protein resides in the nucleus. The protein localises to the chromosome. It localises to the cytoplasm. Functionally, required for initiation of chromosomal DNA replication. Core component of CDC45-MCM-GINS (CMG) helicase, the molecular machine that unwinds template DNA during replication, and around which the replisome is built. The polypeptide is DNA replication complex GINS protein SLD5 (Xenopus laevis (African clawed frog)).